Consider the following 148-residue polypeptide: NPC intracellular cholesterol transporter 2 homolog a (148 aa).

A signal peptide spans 1–16; sequence MLRYAVIACAALVVFA. Cystine bridges form between C24–C140, C39–C46, and C92–C99. N51 is a glycosylation site (N-linked (GlcNAc...) asparagine).

Belongs to the NPC2 family. Broadly expressed with a higher level of expression in many tissues, including midgut, salivary gland and ventral nerve cord.

Its subcellular location is the secreted. Its function is as follows. Functions redundantly with Npc2b in regulating sterol homeostasis and ecdysteroid biosynthesis, probably by controlling the availability of sterol substrate. The protein is NPC intracellular cholesterol transporter 2 homolog a of Drosophila melanogaster (Fruit fly).